The chain runs to 622 residues: Probable potassium transport system protein Kup 1 (622 aa).

A run of 12 helical transmembrane segments spans residues 7–27 (LLVL…TSPL), 50–70 (LISL…VLFL), 96–116 (TAIL…DAMI), 132–152 (VTPA…LLLF), 165–185 (FFGP…FVHI), 210–230 (VGIV…ALYA), 244–264 (WFTV…AFVL), 282–302 (ALLP…QAVI), 334–354 (IYLP…VFLF), 360–380 (LATA…VLSF), 391–411 (TWWA…FLGA), and 416–436 (IHDG…IMWT).

The protein belongs to the HAK/KUP transporter (TC 2.A.72) family.

The protein localises to the cell inner membrane. It catalyses the reaction K(+)(in) + H(+)(in) = K(+)(out) + H(+)(out). Functionally, transport of potassium into the cell. Likely operates as a K(+):H(+) symporter. The polypeptide is Probable potassium transport system protein Kup 1 (Rhizobium meliloti (strain 1021) (Ensifer meliloti)).